Reading from the N-terminus, the 122-residue chain is Large ribosomal subunit protein uL14 (122 aa).

This sequence belongs to the universal ribosomal protein uL14 family. As to quaternary structure, part of the 50S ribosomal subunit. Forms a cluster with proteins L3 and L19. In the 70S ribosome, L14 and L19 interact and together make contacts with the 16S rRNA in bridges B5 and B8.

Functionally, binds to 23S rRNA. Forms part of two intersubunit bridges in the 70S ribosome. In Paraburkholderia phytofirmans (strain DSM 17436 / LMG 22146 / PsJN) (Burkholderia phytofirmans), this protein is Large ribosomal subunit protein uL14.